A 969-amino-acid chain; its full sequence is Translation initiation factor IF-2 (969 aa).

Positions 49–63 (HLRKSHGATDGDKRK) are enriched in basic and acidic residues. Disordered regions lie at residues 49–85 (HLRK…KART), 100–128 (DDVS…REEE), and 143–380 (LRER…SFQA). The span at 105-114 (VAEQGQAQVA) shows a compositional bias: low complexity. Over residues 143–181 (LRERQERLEREEAERRAREEAAEAERRRAEEEAAAKRAA) the composition is skewed to basic and acidic residues. Low complexity predominate over residues 182 to 206 (AEAAAAQQAAQQAAAAQQAAAPADS). Residues 209 to 260 (DEARAAAERAAQREAAKKAEDAAREAAEKARAEQEEIRKRREAAEAEARAIR) are compositionally biased toward basic and acidic residues. Low complexity predominate over residues 301–323 (AQARPAAKKPAAAPAATPAPAGA). A compositionally biased stretch (gly residues) spans 353–366 (SSGGVDRGWRGGPK). The tr-type G domain occupies 469 to 638 (PRPPVVTVMG…LLQAEVLELK (170 aa)). Residues 478 to 485 (GHVDHGKT) are G1. Residue 478–485 (GHVDHGKT) participates in GTP binding. The G2 stretch occupies residues 503-507 (GITQH). Residues 524–527 (DTPG) are G3. Residues 524–528 (DTPGH) and 578–581 (NKID) each bind GTP. Residues 578–581 (NKID) are G4. Residues 614–616 (SAK) are G5.

It belongs to the TRAFAC class translation factor GTPase superfamily. Classic translation factor GTPase family. IF-2 subfamily.

The protein resides in the cytoplasm. One of the essential components for the initiation of protein synthesis. Protects formylmethionyl-tRNA from spontaneous hydrolysis and promotes its binding to the 30S ribosomal subunits. Also involved in the hydrolysis of GTP during the formation of the 70S ribosomal complex. The chain is Translation initiation factor IF-2 from Burkholderia multivorans (strain ATCC 17616 / 249).